The following is a 118-amino-acid chain: Small ribosomal subunit protein uS13 (118 aa).

Positions 94 to 118 are disordered; that stretch reads SLPLRGQRTKTNARTRKGPRKPIRK.

This sequence belongs to the universal ribosomal protein uS13 family. Part of the 30S ribosomal subunit. Forms a loose heterodimer with protein S19. Forms two bridges to the 50S subunit in the 70S ribosome.

Functionally, located at the top of the head of the 30S subunit, it contacts several helices of the 16S rRNA. In the 70S ribosome it contacts the 23S rRNA (bridge B1a) and protein L5 of the 50S subunit (bridge B1b), connecting the 2 subunits; these bridges are implicated in subunit movement. Contacts the tRNAs in the A and P-sites. This is Small ribosomal subunit protein uS13 from Shewanella woodyi (strain ATCC 51908 / MS32).